The primary structure comprises 555 residues: Bicyclo-germacrene synthase (555 aa).

Mg(2+) is bound by residues Asp-311 and Glu-315. The short motif at 311–315 is the DDXXD motif element; the sequence is DDTYE. 2 homodimerization regions span residues 316 to 322 and 392 to 429; these read YATLDEL and EAKW…VGVG. The Mg(2+) site is built by Asp-459 and Glu-467.

This sequence belongs to the terpene synthase family. Homodimer. The cofactor is Mn(2+). Requires Mg(2+) as cofactor. Expressed in peltate glandular trichomes. Present at low levels in flowers, leaves and stems.

It catalyses the reaction (2E,6E)-farnesyl diphosphate = bicyclogermacrene + diphosphate. The catalysed reaction is (2E)-geranyl diphosphate = terpinolene + diphosphate. The enzyme catalyses (2E)-geranyl diphosphate = (4R)-limonene + diphosphate. It carries out the reaction (2E)-geranyl diphosphate + H2O = (2E)-geraniol + diphosphate. It catalyses the reaction (2E,6E)-farnesyl diphosphate = allo-aromadendrene + diphosphate. Its pathway is secondary metabolite biosynthesis; terpenoid biosynthesis. Involved in the biosynthesis of phenolic sesquiterpenes natural products. Sesquiterpene synthase converting (2E,6E)-farnesyl diphosphate (FPP) to alloaromadendrene and bicyclo-germacrene. The product formation is dependent on the metal ions present and in presence of manganese, bicyclo-germacrene is greatly favored while both alloaromadendrene and bicyclo-germacrene are produced in equivalent amounts in the presence of magnesium. Can also convert geranyl diphosphate (GPP) to terpinolene, limonene and geraniol, and this conversion is not affected by the presence of magnesium or manganese. The protein is Bicyclo-germacrene synthase (TPS4) of Origanum vulgare (Wild marjoram).